The chain runs to 132 residues: Tail tube terminator protein (132 aa).

This sequence belongs to the lambda-like tail terminator protein family. In terms of assembly, homohexamer. May bind to major tail protein and /or tape measure protein.

Its subcellular location is the virion. The protein localises to the host cytoplasm. Plays an essential role in tail assembly by capping the rapidly polymerizing tail once it has reached its requisite length and serving as the interaction surface for the completion protein. The sequence is that of Tail tube terminator protein from Escherichia phage N15 (Bacteriophage N15).